Reading from the N-terminus, the 148-residue chain is Ribonuclease pancreatic (148 aa).

The N-terminal stretch at 1 to 25 is a signal peptide; that stretch reads MGLEKSLILFPLLVLVVGWVQPSLG. Substrate is bound by residues lysine 32, arginine 35, 65-69, lysine 90, and arginine 109; that span reads KPVNT. Intrachain disulfides connect cysteine 50–cysteine 108, cysteine 64–cysteine 119, cysteine 82–cysteine 134, and cysteine 89–cysteine 96. Catalysis depends on histidine 143, which acts as the Proton donor.

The protein belongs to the pancreatic ribonuclease family. As to quaternary structure, monomer. Interacts with and forms tight 1:1 complexes with RNH1. Dimerization of two such complexes may occur. Interaction with RNH1 inhibits this protein. In terms of tissue distribution, pancreas.

It localises to the secreted. It catalyses the reaction an [RNA] containing cytidine + H2O = an [RNA]-3'-cytidine-3'-phosphate + a 5'-hydroxy-ribonucleotide-3'-[RNA].. The catalysed reaction is an [RNA] containing uridine + H2O = an [RNA]-3'-uridine-3'-phosphate + a 5'-hydroxy-ribonucleotide-3'-[RNA].. In terms of biological role, endonuclease that catalyzes the cleavage of RNA on the 3' side of pyrimidine nucleotides. Acts on single-stranded and double-stranded RNA. This Peromyscus leucopus (White-footed mouse) protein is Ribonuclease pancreatic (RNASE1).